The chain runs to 331 residues: Trans-O-hydroxybenzylidenepyruvate hydratase-aldolase (331 aa).

This sequence belongs to the DapA family.

It catalyses the reaction (3E)-4-(2-hydroxyphenyl)-2-oxobut-3-enoate + H2O = salicylaldehyde + pyruvate. It participates in aromatic compound metabolism; naphthalene degradation. Involved in the naphthalene upper catabolic pathway. Catalyzes the transformation of trans-O-hydroxybenzylidenepyruvate (THBPA) to salicylaldehyde and pyruvate. The reaction is reversible. Can also use substrate which carry trans-alpha,beta-unsaturated keto acid side chain and adjacent hydroxyl group such as trans-4-(3-hydroxy-2-thianaphthenyl)-2-oxo-but-3-enoate, trans-4-(3-hydroxy-2-benzofuranyl)-2-oxobut-3-enoate, and trans-4-(3-hydroxy-2-thienyl)-2-oxobut-3-enoate. The polypeptide is Trans-O-hydroxybenzylidenepyruvate hydratase-aldolase (nahE) (Pseudomonas putida (Arthrobacter siderocapsulatus)).